We begin with the raw amino-acid sequence, 792 residues long: Zinc finger protein 606 (792 aa).

The 72-residue stretch at 62 to 133 (VTFKDVAVDF…EQACPQRTCP (72 aa)) folds into the KRAB domain. The C2H2-type 1; degenerate zinc finger occupies 289–311 (FKCTDAVKSFNHIIHFGDHKGIH). The segment at 317-344 (YEYKECHQIFNQSPSFNEHPRLHVGENQ) adopts a C2H2-type 2; degenerate zinc-finger fold. The segment at 400-422 (YDYNECGTSFIWSSYLIQHKKTH) adopts a C2H2-type 3; degenerate zinc-finger fold. 13 C2H2-type zinc fingers span residues 428-450 (YECDKCGKVFRNRSALTKHERTH), 456-478 (YECNKCGKAFSWNSHLIVHKRIH), 484-506 (YVCNECGKSFNWNSHLIGHQRTH), 512-534 (FECTECGKSFSWSSHLIAHMRMH), 540-562 (FKCDECEKAFRDYSALSKHERTH), 568-590 (YKCTECGKSFSWSSHLIAHQRTH), 596-618 (YNCQECGKAFRERSALTKHEIIH), 624-646 (YECNKCGKSCSQMAHLVRHQRTH), 652-674 (YECNKCGKSFSQSCHLVAHRRIH), 680-702 (YKCNQCERSFNCSSHLIAHRRTH), 708-730 (YRCNECGKAFNESSSLIVHLRNH), 736-758 (YKCNHCEKAFCKNSSLIIHQRMH), and 764-786 (FICSECGKAFSGHSALLQHQRNH).

The protein belongs to the krueppel C2H2-type zinc-finger protein family. Widely expressed in adult and fetal tissues.

The protein localises to the nucleus. May act as a transcriptional repressor. The sequence is that of Zinc finger protein 606 (ZNF606) from Homo sapiens (Human).